A 304-amino-acid chain; its full sequence is MKEGPISSSSNFNHIPVMGKEIIRSLKELPSELTKKGLIIDATIGGGGHSAQILENFPGIKIIGLDQDPMAIKAASKKLIKFGTRIEIISTNFADFSHHEQAICVLADLGVSSHQLDEPSRGFSFRLNGPIDMRMNPKEGSSAAELIETLSEQNLADLIYELGEEKRSRRIARKIKNDLAENGPYSGTQDLSYAIAGCFPPKQRYGRIHPSTRTFQALRIAVNNELGSLESLLLKAPNWLLENGLFMVMSFHSLEDRRVKSSFKTDNRLKVLSKKPIRASPEEIELNPRSKSAKLRISAKKFLT.

S-adenosyl-L-methionine is bound by residues 47-49, Asp66, Phe93, Asp108, and Gln115; that span reads GGH.

It belongs to the methyltransferase superfamily. RsmH family.

The protein resides in the cytoplasm. It catalyses the reaction cytidine(1402) in 16S rRNA + S-adenosyl-L-methionine = N(4)-methylcytidine(1402) in 16S rRNA + S-adenosyl-L-homocysteine + H(+). In terms of biological role, specifically methylates the N4 position of cytidine in position 1402 (C1402) of 16S rRNA. The chain is Ribosomal RNA small subunit methyltransferase H from Prochlorococcus marinus (strain NATL2A).